Here is a 355-residue protein sequence, read N- to C-terminus: Methyltransferase FUS9 (355 aa).

Positions 18, 63, 86, 123, and 124 each coordinate S-adenosyl-L-homocysteine. Phenylalanine 231 is a Mg(2+) binding site.

It belongs to the methyltransferase superfamily. Type-7 methyltransferase family. Mg(2+) is required as a cofactor.

It functions in the pathway mycotoxin biosynthesis. Its function is as follows. Methyltransferase; part of the gene cluster that mediates the biosynthesis of the mycotoxin fusarin C. Within the cluster, FUS1, FUS2, FUS8 and FUS9 are sufficient for fusarin production. The roles of the other FUS members are yet undetermined. The fusarin C synthetase FUS1 is responsible for the condensation of one acetyl-coenzyme A (CoA) unit with six malonyl-CoA units and the amide linkage of the arising heptaketide and homoserine, subsequently releasing the first intermediate, prefusarin, as an alcohol with an open ring structure. The cytochrome P450 monooxygenase FUS8 participates in multiple oxidation processes at carbon C-20 and is able to use the FUS1 product as substrate, resulting in formation of 20-hydroxy-prefusarin. This reaction seems to be essential before the 2-pyrrolidone ring closure can be catalyzed by FUS2, generating 20-hydroxy-fusarin. FUS8 is able to further oxidizes carbon C-20 after ring closure, resulting in the formation of carboxy-fusarin C. As the last step, FUS9 methylates the hydroxyl group at C-21 to generate fusarin C. Fusarin C can then rearrange to epi-fusarin C, the (z)-isomers, and fusarin A and fusarin D. This chain is Methyltransferase FUS9, found in Gibberella moniliformis (strain M3125 / FGSC 7600) (Maize ear and stalk rot fungus).